Consider the following 167-residue polypeptide: MAHIEKQAGELQEKLIAVNRVSKTVKGGRIFSFTALTVVGDGNGRVGFGYGKAREVPAAIQKAMEKARRNMINVALNNGTLQHPVKGVHTGSRVFMQPASEGTGIIAGGAMRAVLEVAGVHNVLAKAYGSTNPINVVRATIDGLENMNSPEMVAAKRGKSVEEILGK.

The S5 DRBM domain occupies leucine 11–valine 74.

The protein belongs to the universal ribosomal protein uS5 family. In terms of assembly, part of the 30S ribosomal subunit. Contacts proteins S4 and S8.

With S4 and S12 plays an important role in translational accuracy. Its function is as follows. Located at the back of the 30S subunit body where it stabilizes the conformation of the head with respect to the body. The chain is Small ribosomal subunit protein uS5 from Escherichia coli O139:H28 (strain E24377A / ETEC).